The following is a 138-amino-acid chain: ATP synthase epsilon chain (138 aa).

The protein belongs to the ATPase epsilon chain family. F-type ATPases have 2 components, CF(1) - the catalytic core - and CF(0) - the membrane proton channel. CF(1) has five subunits: alpha(3), beta(3), gamma(1), delta(1), epsilon(1). CF(0) has three main subunits: a, b and c.

Its subcellular location is the cell inner membrane. Produces ATP from ADP in the presence of a proton gradient across the membrane. The chain is ATP synthase epsilon chain from Geobacter sp. (strain M21).